A 454-amino-acid chain; its full sequence is uncharacterized protein (454 aa).

The segment at 422 to 454 (EWLPPAHLDHGQPRTNSYFHPEKLLHDSDEDDP) is disordered.

The protein belongs to the Rv1128c/1148c/1588c/1702c/1945/3466 family.

This is an uncharacterized protein from Mycobacterium tuberculosis (strain CDC 1551 / Oshkosh).